A 196-amino-acid polypeptide reads, in one-letter code: Holliday junction branch migration complex subunit RuvA (196 aa).

A domain I region spans residues 1–63 (MINKIYGKIV…DDDVKLFGFL (63 aa)). The domain II stretch occupies residues 64–142 (NISEREVFED…KGDESSSYML (79 aa)). Position 143 (K143) is a region of interest, flexible linker. Residues 143-196 (KFKELEQSIVNMGFDRKLVVVAFREIMLSDKFLILKEAEQEQFLFTETLKRLSV) form a domain III region.

This sequence belongs to the RuvA family. As to quaternary structure, homotetramer. Forms an RuvA(8)-RuvB(12)-Holliday junction (HJ) complex. HJ DNA is sandwiched between 2 RuvA tetramers; dsDNA enters through RuvA and exits via RuvB. An RuvB hexamer assembles on each DNA strand where it exits the tetramer. Each RuvB hexamer is contacted by two RuvA subunits (via domain III) on 2 adjacent RuvB subunits; this complex drives branch migration. In the full resolvosome a probable DNA-RuvA(4)-RuvB(12)-RuvC(2) complex forms which resolves the HJ.

Its subcellular location is the cytoplasm. In terms of biological role, the RuvA-RuvB-RuvC complex processes Holliday junction (HJ) DNA during genetic recombination and DNA repair, while the RuvA-RuvB complex plays an important role in the rescue of blocked DNA replication forks via replication fork reversal (RFR). RuvA specifically binds to HJ cruciform DNA, conferring on it an open structure. The RuvB hexamer acts as an ATP-dependent pump, pulling dsDNA into and through the RuvAB complex. HJ branch migration allows RuvC to scan DNA until it finds its consensus sequence, where it cleaves and resolves the cruciform DNA. The sequence is that of Holliday junction branch migration complex subunit RuvA from Borrelia duttonii (strain Ly).